The primary structure comprises 421 residues: Inner membrane protein YihN (421 aa).

At 1 to 44 the chain is on the periplasmic side; sequence MLTKKKWALFSLLTLCGGTIYKLPSLKDAFYIPMQEYFHLTNGQ. Residues 45 to 65 form a helical membrane-spanning segment; the sequence is IGNAMSVNSFVTTVGFFLSIY. Over 66-73 the chain is Cytoplasmic; that stretch reads FADKLPRR. Residues 74–91 form a helical membrane-spanning segment; the sequence is YTMSFSLIATGLLGVYLT. Topologically, residues 92–95 are periplasmic; it reads TMPG. Residues 96-118 form a helical membrane-spanning segment; that stretch reads YWGILFVWALFGVTCDMMNWPVL. The Cytoplasmic portion of the chain corresponds to 119–146; the sequence is LKSVSRLGNSEQQGRLFGFFETGRGIVD. A helical membrane pass occupies residues 147–167; sequence TVVAFSALAVFTWFGSGLLGF. Lysine 168 is a topological domain (periplasmic). The chain crosses the membrane as a helical span at residues 169–189; sequence AGIWFYSLIVIAVGIIIFFVL. The Cytoplasmic segment spans residues 190–220; it reads NDKEEAPSVEVKKEDGASKNTSMTSVLKDKT. Helical transmembrane passes span 221–241 and 242–262; these read IWLIAFNVFFVYAVYCGLTFF and IPFLKNIYLLPVALVGAYGII. Topologically, residues 263–288 are cytoplasmic; it reads NQYCLKMIGGPIGGMISDKILKSPSK. Helical transmembrane passes span 289–309 and 310–330; these read YLCYTFIISTAALVLLIMLPH and ESMPVYLGMACTLGFGAIVFT. The Cytoplasmic portion of the chain corresponds to 331-354; that stretch reads QRAVFFAPIGEAKIAENKTGAAMA. A helical transmembrane segment spans residues 355–375; that stretch reads LGSFIGYAPAMFCFSLYGYIL. The Periplasmic portion of the chain corresponds to 376 to 385; the sequence is DLNPGIIGYK. The chain crosses the membrane as a helical span at residues 386–406; sequence IVFGIMACFAFSGAVVSVMLV. The Cytoplasmic portion of the chain corresponds to 407-421; sequence KRISQRKKEMLAAEA.

Belongs to the major facilitator superfamily.

The protein resides in the cell inner membrane. The protein is Inner membrane protein YihN (yihN) of Escherichia coli (strain K12).